A 342-amino-acid chain; its full sequence is Probable allantoicase (342 aa).

It belongs to the allantoicase family.

The enzyme catalyses allantoate + H2O = (S)-ureidoglycolate + urea. It participates in nitrogen metabolism; (S)-allantoin degradation; (S)-ureidoglycolate from allantoate (aminidohydrolase route): step 1/1. Functionally, utilization of purines as secondary nitrogen sources, when primary sources are limiting. The sequence is that of Probable allantoicase from Schizosaccharomyces pombe (strain 972 / ATCC 24843) (Fission yeast).